Consider the following 867-residue polypeptide: DNA mismatch repair protein MutS (867 aa).

Residue 606-613 (GPNMSGKS) coordinates ATP.

It belongs to the DNA mismatch repair MutS family.

Functionally, this protein is involved in the repair of mismatches in DNA. It is possible that it carries out the mismatch recognition step. This protein has a weak ATPase activity. The protein is DNA mismatch repair protein MutS of Oceanobacillus iheyensis (strain DSM 14371 / CIP 107618 / JCM 11309 / KCTC 3954 / HTE831).